The chain runs to 196 residues: ATP-dependent Clp protease proteolytic subunit (196 aa).

Catalysis depends on serine 96, which acts as the Nucleophile. Histidine 121 is a catalytic residue.

It belongs to the peptidase S14 family. In terms of assembly, fourteen ClpP subunits assemble into 2 heptameric rings which stack back to back to give a disk-like structure with a central cavity, resembling the structure of eukaryotic proteasomes.

It is found in the cytoplasm. The catalysed reaction is Hydrolysis of proteins to small peptides in the presence of ATP and magnesium. alpha-casein is the usual test substrate. In the absence of ATP, only oligopeptides shorter than five residues are hydrolyzed (such as succinyl-Leu-Tyr-|-NHMec, and Leu-Tyr-Leu-|-Tyr-Trp, in which cleavage of the -Tyr-|-Leu- and -Tyr-|-Trp bonds also occurs).. Cleaves peptides in various proteins in a process that requires ATP hydrolysis. Has a chymotrypsin-like activity. Plays a major role in the degradation of misfolded proteins. The sequence is that of ATP-dependent Clp protease proteolytic subunit from Streptococcus uberis (strain ATCC BAA-854 / 0140J).